A 1065-amino-acid polypeptide reads, in one-letter code: Ceruloplasmin (1065 aa).

Residues 1–19 (MKILILGIFLFLCSTPAWA) form the signal peptide. 2 Plastocyanin-like domains span residues 20–200 (KEKH…LIIC) and 209–357 (KEKH…VQEC). Residues Tyr-55, Gly-64, and Tyr-67 each coordinate Na(+). Cu(2+) is bound by residues His-120 and His-122. O2 is bound at residue His-120. Position 128 (Lys-128) interacts with Ca(2+). Residue Asn-138 is glycosylated (N-linked (GlcNAc...) (complex) asparagine). Gln-143, Asp-146, and Asp-147 together coordinate Ca(2+). Cys-174 and Cys-200 are joined by a disulfide. Positions 180 and 182 each coordinate Cu(2+). His-180 serves as a coordination point for O2. Position 256 (Ser-256) interacts with Na(+). A disulfide bridge links Cys-276 with Cys-357. Positions 295, 338, and 343 each coordinate Cu(2+). Residues Asn-358 and Asn-397 are each glycosylated (N-linked (GlcNAc...) (complex) asparagine). Plastocyanin-like domains lie at 370-560 (HVRH…MKIC) and 570-718 (RQKD…VNQC). Na(+) contacts are provided by Phe-408, Gly-417, and Tyr-420. A disulfide bond links Cys-534 and Cys-560. Asn-588 carries N-linked (GlcNAc...) asparagine glycosylation. Ser-617 provides a ligand contact to Na(+). Cys-637 and Cys-718 are oxidised to a cystine. Residues His-656, Cys-699, His-704, and Met-709 each coordinate Cu(2+). Cys-699 (nucleophile; for glutathione peroxidase activity) is an active-site residue. Ser-722 carries the phosphoserine; by FAM20C modification. Plastocyanin-like domains lie at 730–900 (GERT…LIVC) and 908–1061 (FNPR…QNED). Asn-762 carries N-linked (GlcNAc...) (complex) asparagine glycosylation. Na(+) is bound by residues Phe-767, Gly-776, and Tyr-779. Cys-874 and Cys-900 are oxidised to a cystine. Asn-926 carries an N-linked (GlcNAc...) asparagine glycan. Ser-955 is a binding site for Na(+). The Cu(2+) site is built by His-994, His-997, His-999, His-1039, Cys-1040, His-1041, His-1045, and Met-1050. The O2 site is built by His-997 and His-999. His-1041 is an O2 binding site.

This sequence belongs to the multicopper oxidase family. Found in a complex with MPO and LTF; interacts directly with MPO and LTF, which allows Fe(3+) incorporation into LTF, activation of CP ferroxidase activity and protection of CP antioxidant properties by MPO. Cu(2+) is required as a cofactor. As to expression, expressed by the liver and secreted in plasma.

Its subcellular location is the secreted. The enzyme catalyses 4 Fe(2+) + O2 + 4 H(+) = 4 Fe(3+) + 2 H2O. The catalysed reaction is 4 Cu(+) + O2 + 4 H(+) = 4 Cu(2+) + 2 H2O. It catalyses the reaction a hydroperoxide + 2 glutathione = an alcohol + glutathione disulfide + H2O. It carries out the reaction 4 nitric oxide + O2 + 2 H2O = 4 nitrite + 4 H(+). The enzyme catalyses 2 glutathione + H2O2 = glutathione disulfide + 2 H2O. Multifunctional blue, copper-binding (6-7 atoms per molecule) glycoprotein. It has ferroxidase activity oxidizing Fe(2+) to Fe(3+) without releasing radical oxygen species. It is involved in iron transport across the cell membrane. Copper ions provide a large number of enzymatic activites. Oxidizes highly toxic ferrous ions to the ferric state for further incorporation onto apo-transferrins, catalyzes Cu(+) oxidation and promotes the oxidation of biogenic amines such as norepinephrin and serotonin. Provides Cu(2+) ions for the ascorbate-mediated deaminase degradation of the heparan sulfate chains of GPC1. Has glutathione peroxidase-like activity, can remove both hydrogen peroxide and lipid hydroperoxide in the presence of thiols. Also shows NO-oxidase and NO2 synthase activities that determine endocrine NO homeostasis. This chain is Ceruloplasmin, found in Homo sapiens (Human).